The sequence spans 310 residues: MIERKALIFNIQKYNMYDGPGVRTLVFFKGCPLRCKWCSNPEGQLRQYQVLYKENLCVHCGACVPVCPAGVHTISASTLRHGFAEGAQCIGCRRCEDVCPSSALAVVGEQKTISELLEVIEEDRPFYETSGGGVTLGGGEVLMQPEAAVNLLAACKQHGINTAIETCGYAKQEVVMKAAQYVDLFLYDVKHIDSARHYELTGVRNELILSNLTWLLENKHNVKIRVPLLRGVNDSEDDLRGLVEYLRPYQDYKNFKGIDLLPYHKMGVGKYKQLGWEYPIEGNPALSDADLERVEACIRKYDFPVSVIRH.

A Radical SAM core domain is found at 17–304 (YDGPGVRTLV…EACIRKYDFP (288 aa)). The [4Fe-4S] cluster site is built by C31, C35, C38, C57, C60, C63, and C99. 37 to 39 (WCS) contributes to the S-adenosyl-L-methionine binding site. 2 consecutive 4Fe-4S ferredoxin-type domains span residues 48 to 77 (YQVLYKENLCVHCGACVPVCPAGVHTISAS) and 79 to 109 (LRHGFAEGAQCIGCRRCEDVCPSSALAVVGE). S-adenosyl-L-methionine contacts are provided by residues G139, 188–190 (DVK), and H264.

The protein belongs to the organic radical-activating enzymes family. In terms of assembly, monomer. Requires [4Fe-4S] cluster as cofactor.

The enzyme catalyses glycyl-[protein] + reduced [flavodoxin] + S-adenosyl-L-methionine = glycin-2-yl radical-[protein] + semiquinone [flavodoxin] + 5'-deoxyadenosine + L-methionine + H(+). The protein operates within amine and polyamine metabolism; choline degradation. In terms of biological role, catalyzes activation of the choline trimethylamine-lyase CutC under anaerobic conditions by generation of an organic free radical on a glycine residue, via a homolytic cleavage of S-adenosyl-L-methionine (SAM). Is involved in the anaerobic choline utilization pathway that allows D.alaskensis to grow on choline as a source of carbon and energy. In Oleidesulfovibrio alaskensis (strain ATCC BAA-1058 / DSM 17464 / G20) (Desulfovibrio alaskensis), this protein is Choline trimethylamine-lyase activating enzyme.